Reading from the N-terminus, the 207-residue chain is Ribosome maturation factor RimP (207 aa).

Belongs to the RimP family.

Its subcellular location is the cytoplasm. In terms of biological role, required for maturation of 30S ribosomal subunits. This Parvibaculum lavamentivorans (strain DS-1 / DSM 13023 / NCIMB 13966) protein is Ribosome maturation factor RimP.